The following is a 304-amino-acid chain: Acetyl-coenzyme A carboxylase carboxyl transferase subunit beta (304 aa).

In terms of domain architecture, CoA carboxyltransferase N-terminal spans 23–292 (VWTKCDSCGQ…PNPEAPREGV (270 aa)). Residues C27, C30, C46, and C49 each contribute to the Zn(2+) site. Residues 27–49 (CDSCGQVLYRAELERNLEVCPKC) form a C4-type zinc finger. The disordered stretch occupies residues 284 to 304 (NPEAPREGVVVPPVPDQEPEA). Over residues 295–304 (PPVPDQEPEA) the composition is skewed to pro residues.

This sequence belongs to the AccD/PCCB family. Acetyl-CoA carboxylase is a heterohexamer composed of biotin carboxyl carrier protein (AccB), biotin carboxylase (AccC) and two subunits each of ACCase subunit alpha (AccA) and ACCase subunit beta (AccD). The cofactor is Zn(2+).

It localises to the cytoplasm. The catalysed reaction is N(6)-carboxybiotinyl-L-lysyl-[protein] + acetyl-CoA = N(6)-biotinyl-L-lysyl-[protein] + malonyl-CoA. The protein operates within lipid metabolism; malonyl-CoA biosynthesis; malonyl-CoA from acetyl-CoA: step 1/1. Component of the acetyl coenzyme A carboxylase (ACC) complex. Biotin carboxylase (BC) catalyzes the carboxylation of biotin on its carrier protein (BCCP) and then the CO(2) group is transferred by the transcarboxylase to acetyl-CoA to form malonyl-CoA. This is Acetyl-coenzyme A carboxylase carboxyl transferase subunit beta from Shigella flexneri serotype 5b (strain 8401).